The following is a 1487-amino-acid chain: METSQIRNGFNKVEVDVVGPLKDLLVRVMKNINTPFKILNETFKINYCDQQETKTKSSFYIQTLDANDKSSLELTKSAIKNIQMQQQQQQQQQQQQQQQQHHDIFQFTQPSSSHNHSNHHHHHHQQQLQQQQQQQLQQQMKTPKLLFFIVMSVGVGKSYIKNIKEEAGTIPILEWFTNYIRSWEEVFKLTSNQVTSHIKRQLLTKACTTGNINLLDEILLSGISKEQIKETQTIGHGIILKSLIVNNLDSIVVSGSMSLLGAVIDNDNDKKGSSLILSKLNLNLFPKSIITACFNLAELDLSYNNIKEIPKEICQLKHLKILNMNNNQLDDLPLELANLTNLKYLAVQDNPLNKFPHHIIEQGTKRTLVFLKNIIEGKKSETWNKVKLMFVGQEGVGKSSLCKALMGSRRRSSSSFAAELQKSGDTISTEGVKIQSIKGKKIDFYAWDFGGQQVFYPTHQFFLTNQALYLLVFKLTDPNFAERVNYWTLQIKANSGLSVPMIFLVGTHCDACTPEQLSSAEQILKENFVKYSRIRQNAISFVSCTNGTGIKELKKILTNEAEKSNLIKSNIPGSYLILEQRLTDRGANSSRILINQNNINQNNNNNNNNNNHNNCNNNENCTTTAATAGTTTMTSTTTTTTNYSNENILNTSSNSLIALFTRSNSNSNLSNNYQKPLVNQKYIDYNDFERECKLSHLAQEEIQGATEFLHNMGIILHYDTPILRSLVVLDPQWLADVMSSLITFSHNWIKNGILNHSELVSIWSGKYDQSIWPSLLKLLEKFEVSYELPNEFPSRSLIPSLLPEEPIDRIQEIKEKLWIPLPEAIESKRVQIFGCQYNFDFMPLGFFPRLLLRILLIKGIDIKTYWANGILLDILTTEDIKIQKLNHKKHSILPNNSSSTSSSTSSSTSSSTSSSSSSSTSSSSTSTTTTTVQIQSSPFGNSTTIVNKLTNIDNNNNNNNNNNNNNNNNNNINNNNNNNNNNNNNNNNNNNNNNNNNNNNNNNNNNIKNIINNFENQNNLNNIITNNFGGKFEIIKKNDFESPLSSKKPKHQVLVTFKNQKSFESKDKDTYKLNVEIRSFNVSNNNDKDFLASLFFQQLLSTIDTLLSGSYGGLKVTRLIPCIHCIEKDPHSEPHLFDINSCISQLLLGKSQLVCGKDSTTPVRIDYIAPDLSIKKIPILLEDQVVCEEQIGVGGFGLVHKGKLILQDKSLVVAIKSYIVGNSSASDIIRKFQEFHHEMYIMSSLNHLNIVKLFGSMQNPPRMVMEFAPHGDLYHFLEKKKNIKWSFKVRLMLDIAKGIEYLQNQNPPIVHRDLRSPNIFLFSLDENAPVCAKVADFGLSQQSLYSVSGLLGNFQWMAPETIGAEESYTEKIDTYSFSMILFTILTGECPFDEFTSFGKMEFIRKIREEDLRPTIPSDCPPTISNLIELCWSGDPKKRPHFSYIVKELTNFYYNLNLSPIPEQKSINDKSPHPDLISNGVPKLQIAK.

The segment at 108-134 is disordered; sequence TQPSSSHNHSNHHHHHHQQQLQQQQQQ. The span at 116–125 shows a compositional bias: basic residues; sequence HSNHHHHHHQ. LRR repeat units lie at residues 295 to 316, 318 to 340, and 341 to 362; these read NLAELDLSYNNIKEIPKEICQL, HLKILNMNNNQLDDLPLELANLT, and NLKYLAVQDNPLNKFPHHIIEQ. In terms of domain architecture, Roc spans 379 to 564; the sequence is KSETWNKVKL…KILTNEAEKS (186 aa). Residues 379–564 form a small GTPase-like region; the sequence is KSETWNKVKL…KILTNEAEKS (186 aa). Residues 392-399, 448-452, and 507-510 each bind GTP; these read GQEGVGKS, DFGGQ, and THCD. Positions 678 to 872 constitute a COR domain; the sequence is VNQKYIDYND…KTYWANGILL (195 aa). The segment at 891–1007 is disordered; it reads SILPNNSSST…NNNNNNNNNI (117 aa). Over residues 897–931 the composition is skewed to low complexity; sequence SSSTSSSTSSSTSSSTSSSSSSSTSSSSTSTTTTT. Positions 932–950 are enriched in polar residues; the sequence is VQIQSSPFGNSTTIVNKLT. Residues 951–1007 show a composition bias toward low complexity; sequence NIDNNNNNNNNNNNNNNNNNNINNNNNNNNNNNNNNNNNNNNNNNNNNNNNNNNNNI. Positions 1185–1452 constitute a Protein kinase domain; that stretch reads VVCEEQIGVG…YIVKELTNFY (268 aa). Residues 1191-1199 and Lys1216 contribute to the ATP site; that span reads IGVGGFGLV. Asp1313 serves as the catalytic Proton acceptor. The segment at 1464-1487 is disordered; the sequence is KSINDKSPHPDLISNGVPKLQIAK.

This sequence belongs to the protein kinase superfamily. TKL Ser/Thr protein kinase family. ROCO subfamily.

It catalyses the reaction L-seryl-[protein] + ATP = O-phospho-L-seryl-[protein] + ADP + H(+). The enzyme catalyses L-threonyl-[protein] + ATP = O-phospho-L-threonyl-[protein] + ADP + H(+). The protein is Probable serine/threonine-protein kinase roco11 (roco11) of Dictyostelium discoideum (Social amoeba).